We begin with the raw amino-acid sequence, 332 residues long: MPIRVGVIGAGVMGADHIRNLSTTIGGAKVTFVADLDAGRAAAAAPPSARITTDPTELINSSDVDAVVVASHDSTHAGLVLECFEAMTPVLCEKPLAPTLLESLEVVAADADIVAATGASLLSLGFMRRFDPGYVALRQAVQGRVQGEPLMVHCVSRNAAAGPGTTSELAITNSAIHELDIIPWLLGSPVTEVSWQAGKQTSRAEPGLQDPSFMTLRTADGTLTTLELYLNAQYGYTTRCEVVSEQGTTSLQESSLLGIEQDGTRQAVIPADWRPRFADAYRLQLQAWISALAGGEAPSLAGAQDGLNASLVAQAMIQSLHSDGTTTKVSYS.

This sequence belongs to the Gfo/Idh/MocA family. Homotetramer.

It carries out the reaction myo-inositol + NAD(+) = scyllo-inosose + NADH + H(+). Involved in the oxidation of myo-inositol (MI) to 2-keto-myo-inositol (2KMI or 2-inosose). This chain is Inositol 2-dehydrogenase 2, found in Paenarthrobacter aurescens (strain TC1).